Here is a 498-residue protein sequence, read N- to C-terminus: Probable lysophospholipase BODYGUARD 3 (498 aa).

Residues 1 to 55 (MAVMKIKGAATVAGTWLNEAVSFVVFCILDIVDSFLCLLYKAADYLFEAEWKPCY) form the signal peptide. Cysteine 56 carries N-palmitoyl cysteine lipidation. An AB hydrolase-1 domain is found at 220–326 (VLFIHGFISS…LTLLAPPYYP (107 aa)). Residue histidine 224 is part of the active site. The Nucleophile role is filled by serine 297. Active-site charge relay system residues include aspartate 446 and histidine 474.

The protein localises to the cell membrane. It localises to the secreted. It is found in the cell wall. In terms of biological role, involved in cuticle development and morphogenesis. The chain is Probable lysophospholipase BODYGUARD 3 from Arabidopsis thaliana (Mouse-ear cress).